The sequence spans 878 residues: Phosphoenolpyruvate carboxylase (878 aa).

Active-site residues include histidine 140 and lysine 545.

Belongs to the PEPCase type 1 family. Mg(2+) serves as cofactor.

It carries out the reaction oxaloacetate + phosphate = phosphoenolpyruvate + hydrogencarbonate. Its function is as follows. Forms oxaloacetate, a four-carbon dicarboxylic acid source for the tricarboxylic acid cycle. This chain is Phosphoenolpyruvate carboxylase, found in Pseudomonas syringae pv. tomato (strain ATCC BAA-871 / DC3000).